The following is a 224-amino-acid chain: Elongation factor 1-beta 2 (224 aa).

Ala-2 carries the post-translational modification N-acetylalanine. In terms of domain architecture, GST C-terminal spans 14–65 (VKSVEEHLAGKTYISGDQLSVDDVKVYAAVPVKPSDAFPNASKWYESVASQL). A disordered region spans residues 89-139 (EAEAPAAAADDDDDMDLFGDETEEEKKAAEEREAAKKDTKKPKESGKSSVL). The segment covering 97–111 (ADDDDDMDLFGDETE) has biased composition (acidic residues). The span at 112–134 (EEKKAAEEREAAKKDTKKPKESG) shows a compositional bias: basic and acidic residues.

This sequence belongs to the EF-1-beta/EF-1-delta family. As to quaternary structure, EF-1 is composed of 4 subunits: alpha, beta (1B-alpha=beta'), delta (1B-beta), and gamma (1B-gamma).

In terms of biological role, EF-1-beta and EF-1-delta stimulate the exchange of GDP bound to EF-1-alpha to GTP. This chain is Elongation factor 1-beta 2, found in Arabidopsis thaliana (Mouse-ear cress).